A 366-amino-acid polypeptide reads, in one-letter code: Chorismate synthase (366 aa).

The NADP(+) site is built by arginine 48 and arginine 54. FMN-binding positions include 125-127 (RSS), 238-239 (NA), glycine 278, 293-297 (KPTSS), and arginine 319.

Belongs to the chorismate synthase family. Homotetramer. It depends on FMNH2 as a cofactor.

It catalyses the reaction 5-O-(1-carboxyvinyl)-3-phosphoshikimate = chorismate + phosphate. The protein operates within metabolic intermediate biosynthesis; chorismate biosynthesis; chorismate from D-erythrose 4-phosphate and phosphoenolpyruvate: step 7/7. Catalyzes the anti-1,4-elimination of the C-3 phosphate and the C-6 proR hydrogen from 5-enolpyruvylshikimate-3-phosphate (EPSP) to yield chorismate, which is the branch point compound that serves as the starting substrate for the three terminal pathways of aromatic amino acid biosynthesis. This reaction introduces a second double bond into the aromatic ring system. The chain is Chorismate synthase from Burkholderia cenocepacia (strain HI2424).